Here is a 340-residue protein sequence, read N- to C-terminus: Anthocyanidin reductase (340 aa).

2 residues coordinate NADP(+): lysine 49 and tyrosine 169.

The protein belongs to the NAD(P)-dependent epimerase/dehydratase family. Dihydroflavonol-4-reductase subfamily. As to quaternary structure, homo- or heterodimer. Flowers and young siliques. Detected specifically in the endothelium of seed coat.

It catalyses the reaction a (2R,3R)-flavan-3-ol + 2 NAD(+) = an anthocyanidin with a 3-hydroxy group + 2 NADH + 2 H(+). The catalysed reaction is a (2R,3R)-flavan-3-ol + 2 NADP(+) = an anthocyanidin with a 3-hydroxy group + 2 NADPH + 2 H(+). It participates in secondary metabolite biosynthesis; flavonoid biosynthesis. Inhibited by (+)-catechin, quercetin and (+)- and (-)-dihydroquercetin. Not inhibited by salt. Positive cooperativity with NADPH acting as cosubstrate and modulator. Functionally, involved in the biosynthesis of condensed tannins. Converts cyanidin into (-)-epicatechin as the major product. The chain is Anthocyanidin reductase (BAN) from Arabidopsis thaliana (Mouse-ear cress).